Consider the following 345-residue polypeptide: Phosphoribosylformylglycinamidine cyclo-ligase (345 aa).

It belongs to the AIR synthase family.

Its subcellular location is the cytoplasm. It carries out the reaction 2-formamido-N(1)-(5-O-phospho-beta-D-ribosyl)acetamidine + ATP = 5-amino-1-(5-phospho-beta-D-ribosyl)imidazole + ADP + phosphate + H(+). Its pathway is purine metabolism; IMP biosynthesis via de novo pathway; 5-amino-1-(5-phospho-D-ribosyl)imidazole from N(2)-formyl-N(1)-(5-phospho-D-ribosyl)glycinamide: step 2/2. This chain is Phosphoribosylformylglycinamidine cyclo-ligase, found in Escherichia coli (strain K12 / MC4100 / BW2952).